The chain runs to 347 residues: Molybdenum cofactor biosynthesis bifunctional protein (347 aa).

The molybdenum cofactor biosynthesis protein C stretch occupies residues 1–158 (MFTHLDENQQ…EKTGGKADVS (158 aa)). Substrate is bound by residues 75–77 (FCH) and 116–117 (ME). D131 functions as the For MoaC activity in the catalytic mechanism. A molybdenum cofactor guanylyltransferase region spans residues 159 to 347 (QTPLYGLVLT…NSPEDYGQIN (189 aa)). Residues 167-169 (LTG), K179, D226, and D255 contribute to the GTP site. D255 serves as a coordination point for Mg(2+).

This sequence in the N-terminal section; belongs to the MoaC family. In the C-terminal section; belongs to the MobA family. Requires Mg(2+) as cofactor.

It is found in the cytoplasm. It carries out the reaction Mo-molybdopterin + GTP + H(+) = Mo-molybdopterin guanine dinucleotide + diphosphate. The enzyme catalyses (8S)-3',8-cyclo-7,8-dihydroguanosine 5'-triphosphate = cyclic pyranopterin phosphate + diphosphate. It functions in the pathway cofactor biosynthesis; molybdopterin biosynthesis. Functionally, catalyzes the conversion of (8S)-3',8-cyclo-7,8-dihydroguanosine 5'-triphosphate to cyclic pyranopterin monophosphate (cPMP). Its function is as follows. Transfers a GMP moiety from GTP to Mo-molybdopterin (Mo-MPT) cofactor (Moco or molybdenum cofactor) to form Mo-molybdopterin guanine dinucleotide (Mo-MGD) cofactor. This is Molybdenum cofactor biosynthesis bifunctional protein (moaC/mobA) from Synechocystis sp. (strain ATCC 27184 / PCC 6803 / Kazusa).